A 78-amino-acid polypeptide reads, in one-letter code: Lantibiotic cinnamycin (78 aa).

A propeptide spanning residues 1–59 (MTASILQQSVVDADFRAALLENPAAFGASAAALPTPVEAQDQASLDFWTKDIAATEAFA) is cleaved from the precursor. Cross-links (beta-methyllanthionine (Cys-Thr)) lie at residues 60 to 77 (CRQSCSFGPFTFVCDGNT) and 64 to 70 (CSFGPFT). Residues 63–73 (SCSFGPFTFVC) constitute a cross-link (lanthionine (Ser-Cys)). The lysinoalanine (Ser-Lys) cross-link spans 65–78 (SFGPFTFVCDGNTK). (3R)-3-hydroxyaspartate is present on aspartate 74.

The protein belongs to the type B lantibiotic family. Maturation of lantibiotics involves the enzymatic conversion of Thr, and Ser into dehydrated AA and the formation of thioether bonds with cysteine or the formation of dialkylamine bonds with lysine. This is followed by membrane translocation and cleavage of the modified precursor.

Can act as inhibitor of the enzyme phospholipase A2, and of the angiotensin-converting enzyme. Shows inhibitory activities against herpes simplex virus and immunopotentiating activities. Its antimicrobial activities are not very pronounced. The sequence is that of Lantibiotic cinnamycin (cinA) from Streptomyces griseoverticillatus (Streptoverticillium griseoverticillatum).